We begin with the raw amino-acid sequence, 658 residues long: uncharacterized protein (658 aa).

Low complexity predominate over residues 516–639; that stretch reads SSNNSNSSNN…NNNNNSSQGG (124 aa). The segment at 516 to 646 is disordered; the sequence is SSNNSNSSNN…QGGNSQGGSG (131 aa).

It is found in the cytoplasm. This is an uncharacterized protein from Schizosaccharomyces pombe (strain 972 / ATCC 24843) (Fission yeast).